A 185-amino-acid polypeptide reads, in one-letter code: CASP-like protein 2C3 (185 aa).

The Cytoplasmic segment spans residues 1-13 (MAAAARVSEVKAE). A helical transmembrane segment spans residues 14–34 (GLLRGACAALAAAAALLVGLS). Over 35–53 (TQTETVLLVRKKATVKDVQ) the chain is Extracellular. A helical membrane pass occupies residues 54–74 (ALWVLAMAAAAAAGYHLLQLL). The Cytoplasmic segment spans residues 75–104 (KCLYLGRVGGARPCRRSSRALAWTCLLLDK). The helical transmembrane segment at 105 to 125 (ACAYTTFATTVAAAQACVVAL) threads the bilayer. Residues 126–146 (DGAHAVQWTKLCNIYTRFCEQ) lie on the Extracellular side of the membrane. Residues 147–167 (VAGSLVLGMLAAVGTAVLSAA) traverse the membrane as a helical segment. Over 168 to 185 (SARNVFRHYSSLETYAAH) the chain is Cytoplasmic.

It belongs to the Casparian strip membrane proteins (CASP) family. As to quaternary structure, homodimer and heterodimers.

The protein resides in the cell membrane. The protein is CASP-like protein 2C3 of Zea mays (Maize).